The following is a 1042-amino-acid chain: Isoleucine--tRNA ligase (1042 aa).

A 'HIGH' region motif is present at residues 48 to 58; that stretch reads PFATGLPHFGH. The 'KMSKS' region signature appears at 594–598; it reads KMSKS. Lys-597 is an ATP binding site.

This sequence belongs to the class-I aminoacyl-tRNA synthetase family. IleS type 2 subfamily. Monomer. It depends on Zn(2+) as a cofactor.

Its subcellular location is the cytoplasm. The catalysed reaction is tRNA(Ile) + L-isoleucine + ATP = L-isoleucyl-tRNA(Ile) + AMP + diphosphate. In terms of biological role, catalyzes the attachment of isoleucine to tRNA(Ile). As IleRS can inadvertently accommodate and process structurally similar amino acids such as valine, to avoid such errors it has two additional distinct tRNA(Ile)-dependent editing activities. One activity is designated as 'pretransfer' editing and involves the hydrolysis of activated Val-AMP. The other activity is designated 'posttransfer' editing and involves deacylation of mischarged Val-tRNA(Ile). This chain is Isoleucine--tRNA ligase, found in Borreliella afzelii (strain PKo) (Borrelia afzelii).